The sequence spans 489 residues: Neuropeptide CCHamide-2 receptor (489 aa).

At 1–74 (MYASLMDVGQ…DRPETYIVTV (74 aa)) the chain is on the extracellular side. N-linked (GlcNAc...) asparagine glycans are attached at residues Asn25 and Asn50. A helical transmembrane segment spans residues 75–95 (LYTLIFIVGVLGNGTLVIIFF). Residues 96–107 (RHRSMRNIPNTY) lie on the Cytoplasmic side of the membrane. A helical membrane pass occupies residues 108–128 (ILSLALADLLVILVCVPVATI). Residues 129–143 (VYTQESWPFERNMCR) are Extracellular-facing. The cysteines at positions 142 and 225 are disulfide-linked. The helical transmembrane segment at 144–164 (ISEFFKDISIGVSVFTLTALS) threads the bilayer. At 165-184 (GERYCAIVNPLRKLQTKPLT) the chain is on the cytoplasmic side. Residues 185 to 205 (VFTAVMIWILAILLGMPSVLF) form a helical membrane-spanning segment. Topologically, residues 206 to 235 (SDIKSYPVFTATGNMTIEVCSPFRDPEYAK) are extracellular. The N-linked (GlcNAc...) asparagine glycan is linked to Asn219. The helical transmembrane segment at 236–256 (FMVAGKALVYYLLPLSIIGAL) threads the bilayer. Topologically, residues 257–293 (YIMMAKRLHMSARNMPGEQQSMQSRTQARARLHVARM) are cytoplasmic. A helical transmembrane segment spans residues 294–314 (VVAFVVVFFICFFPYHVFELW). Residues 315–333 (YHFYPTAEEDFDEFWNVLR) lie on the Extracellular side of the membrane. The helical transmembrane segment at 334 to 354 (IVGFCTSFLNSCVNPVALYCV) threads the bilayer. Residues 355–489 (SGVFRQHFNR…NRYESGVMRY (135 aa)) are Cytoplasmic-facing. The tract at residues 438–468 (SFHRQDSMPLQHGNAHGGGAGGGSSGLGAGG) is disordered. Positions 452–468 (AHGGGAGGGSSGLGAGG) are enriched in gly residues.

Belongs to the G-protein coupled receptor 1 family. As to expression, highly expressed in larval brain. Also highly expressed in adult brain with very low levels in larval and adult gut.

It localises to the cell membrane. In terms of biological role, receptor for the neuropeptide CCHamide-2. This chain is Neuropeptide CCHamide-2 receptor, found in Drosophila melanogaster (Fruit fly).